A 426-amino-acid chain; its full sequence is Glutamate-1-semialdehyde 2,1-aminomutase (426 aa).

Lys-265 bears the N6-(pyridoxal phosphate)lysine mark.

Belongs to the class-III pyridoxal-phosphate-dependent aminotransferase family. HemL subfamily. As to quaternary structure, homodimer. Pyridoxal 5'-phosphate is required as a cofactor.

Its subcellular location is the cytoplasm. It catalyses the reaction (S)-4-amino-5-oxopentanoate = 5-aminolevulinate. It functions in the pathway porphyrin-containing compound metabolism; protoporphyrin-IX biosynthesis; 5-aminolevulinate from L-glutamyl-tRNA(Glu): step 2/2. The protein is Glutamate-1-semialdehyde 2,1-aminomutase of Enterobacter sp. (strain 638).